The primary structure comprises 478 residues: MARKTLRARRFFSLIFPFFFITSVYAEQTPESAKTVTVEAKNETFAPQHPDQYQSWKATSEQSAREDALAEDPRLVILWAGYPFSRDYNKPRGHAYAVTDVRETLRTGAPKTAEDGPLPMACWSCKSPDVARLIQQEGEDGYFHGKWARGGPEIVNDLGCADCHNTASDDFAQGKPALTLSRPYAERAMEAIGKPFDKAGRFDQQSMVCGQCHVEYYFDGKNKAVKFPWDEGMKVENMEQYYDTIAFSDWTNSLSKTPMLKAQHPEYETWSAGIHGRNNVTCIDCHMPKVQNAEGKLYTDHKIGNPFDNFAQTCANCHTQDKASLQKVVAERKQAIHDLKIKVEDQLVHAHFEAKAAWDAGATDAEMKPILNDIRHAQWRWDLAIASHGIHMHAPEEGLRMLGSAMDKAADARTKLARLLATKGITHEIPLPDISTKEKAQKAIGLNMQQINAEKQDFLKTVVPQWEDQARKNGLLSQ.

Residues 1–26 (MARKTLRARRFFSLIFPFFFITSVYA) form the signal peptide. His-94 provides a ligand contact to heme c. Residues Cys-122, Cys-125, and Lys-126 each contribute to the heme site. Residues Cys-160, Cys-163, His-164, Cys-209, Cys-212, and His-213 each coordinate heme c. Positions 215, 216, 261, and 263 each coordinate Ca(2+). Tyr-216 contributes to the substrate binding site. His-264 is a binding site for substrate. Residues His-275, Cys-282, Cys-285, His-286, His-301, Cys-314, Cys-317, His-318, and His-393 each coordinate heme c.

Belongs to the cytochrome c-552 family. Ca(2+) is required as a cofactor. The cofactor is heme c.

Its subcellular location is the periplasm. It carries out the reaction 6 Fe(III)-[cytochrome c] + NH4(+) + 2 H2O = 6 Fe(II)-[cytochrome c] + nitrite + 8 H(+). It functions in the pathway nitrogen metabolism; nitrate reduction (assimilation). Catalyzes the reduction of nitrite to ammonia, consuming six electrons in the process. The polypeptide is Cytochrome c-552 (Salmonella agona (strain SL483)).